The sequence spans 436 residues: 3-ketoacyl-CoA thiolase (436 aa).

The active-site Acyl-thioester intermediate is Cys99. Catalysis depends on proton acceptor residues His392 and Cys422.

It belongs to the thiolase-like superfamily. Thiolase family. In terms of assembly, heterotetramer of two alpha chains (FadJ) and two beta chains (FadI).

The protein resides in the cytoplasm. It carries out the reaction an acyl-CoA + acetyl-CoA = a 3-oxoacyl-CoA + CoA. It participates in lipid metabolism; fatty acid beta-oxidation. Its function is as follows. Catalyzes the final step of fatty acid oxidation in which acetyl-CoA is released and the CoA ester of a fatty acid two carbons shorter is formed. This Salmonella paratyphi B (strain ATCC BAA-1250 / SPB7) protein is 3-ketoacyl-CoA thiolase.